We begin with the raw amino-acid sequence, 617 residues long: Sphingosine kinase 2 (617 aa).

The tract at residues 1–140 is required for binding to sulfatide and phosphoinositides and for membrane localization; that stretch reads MAPPPLLPVA…LSGDQEITPE (140 aa). The short motif at 87-95 is the Nuclear localization signal element; the sequence is RGRRGGRRR. Residues 143–290 enclose the DAGKc domain; it reads PRKPRLLILV…LDLLSVTLAS (148 aa). ATP contacts are provided by residues 153–155 and 185–189; these read NPF and TERQN. Residue 210–213 coordinates substrate; that stretch reads SGDG. The Proton donor/acceptor role is filled by D212. ATP contacts are provided by residues E217 and 242–244; that span reads GSG. D309 is a substrate binding site. Positions 316 and 322 each coordinate ATP. S358 and S364 each carry phosphoserine. The interval 371–472 is disordered; sequence APAPAATHSP…GFLPPTHSAP (102 aa). Residue T377 is modified to Phosphothreonine. The Nuclear export signal signature appears at 381-390; it reads LHRSVSDLPL. Residues S384 and S386 each carry the phosphoserine modification. Residues 412-426 are compositionally biased toward gly residues; that stretch reads NGGGPELTGDWGGAG. Residue T578 is modified to Phosphothreonine. An ATP-binding site is contributed by 586–588; it reads DGE.

In terms of assembly, interacts with histone H3. Interacts with HDAC1, HDAC2, MBD2 and SIN3A. Interacts with EEF1A1; the interaction enhances SPHK2 kinase activity. Interacts with PHB2. Requires Mg(2+) as cofactor. In terms of processing, phosphorylated by PKD on Ser-384 and Ser-386 upon PMA treatment. Phosphorylation induces export from the nucleus to the cytoplasm. Phosphorylated by MAPK1 and MAPK2 at Thr-578, phosphorylation is induced by agonists such as EGF and PMA and increases kinase activity. Post-translationally, cleaved by CASP1 in apoptotic cells. The truncated form is released from cells. As to expression, expressed in heart, brain, liver, kidney and testis. Expressed by mast cells (at protein level). In the substantia nigra, expressed by dopaminergic neurons (at protein level).

Its subcellular location is the lysosome membrane. The protein resides in the cytoplasm. The protein localises to the cell membrane. It localises to the endoplasmic reticulum. It is found in the nucleus. Its subcellular location is the mitochondrion inner membrane. The catalysed reaction is a sphingoid base + ATP = a sphingoid 1-phosphate + ADP + H(+). It catalyses the reaction sphing-4-enine + ATP = sphing-4-enine 1-phosphate + ADP + H(+). It carries out the reaction sphinganine + ATP = sphinganine 1-phosphate + ADP + H(+). The enzyme catalyses (4R)-hydroxysphinganine + ATP = (4R)-hydroxysphinganine 1-phosphate + ADP + H(+). Functionally, catalyzes the phosphorylation of sphingosine to form sphingosine-1-phosphate (SPP), a lipid mediator with both intra- and extracellular functions. Also acts on D-erythro-dihydrosphingosine, D-erythro-sphingosine and L-threo-dihydrosphingosine. Binds phosphoinositides. In contrast to prosurvival SPHK1, has a positive effect on intracellular ceramide levels, inhibits cells growth and enhances apoptosis. In mitochondria, is important for cytochrome-c oxidase assembly and mitochondrial respiration. The SPP produced in mitochondria binds PHB2 and modulates the regulation via PHB2 of complex IV assembly and respiration. In nucleus, plays a role in epigenetic regulation of gene expression. Interacts with HDAC1 and HDAC2 and, through SPP production, inhibits their enzymatic activity, preventing the removal of acetyl groups from lysine residues with histones. Up-regulates acetylation of histone H3-K9, histone H4-K5 and histone H2B-K12. In nucleus, may have an inhibitory effect on DNA synthesis and cell cycle. In mast cells, is the main regulator of SPP production which mediates calcium influx, NF-kappa-B activation, cytokine production, such as TNF and IL6, and degranulation of mast cells. In dopaminergic neurons, is involved in promoting mitochondrial functions regulating ATP and ROS levels. Also involved in the regulation of glucose and lipid metabolism. The protein is Sphingosine kinase 2 of Mus musculus (Mouse).